Reading from the N-terminus, the 285-residue chain is 4-diphosphocytidyl-2-C-methyl-D-erythritol kinase (285 aa).

Residue Lys-12 is part of the active site. 95–105 (PMGGGVGGGSS) provides a ligand contact to ATP. The active site involves Asp-137.

The protein belongs to the GHMP kinase family. IspE subfamily.

The enzyme catalyses 4-CDP-2-C-methyl-D-erythritol + ATP = 4-CDP-2-C-methyl-D-erythritol 2-phosphate + ADP + H(+). The protein operates within isoprenoid biosynthesis; isopentenyl diphosphate biosynthesis via DXP pathway; isopentenyl diphosphate from 1-deoxy-D-xylulose 5-phosphate: step 3/6. Functionally, catalyzes the phosphorylation of the position 2 hydroxy group of 4-diphosphocytidyl-2C-methyl-D-erythritol. In Actinobacillus pleuropneumoniae serotype 7 (strain AP76), this protein is 4-diphosphocytidyl-2-C-methyl-D-erythritol kinase.